Reading from the N-terminus, the 470-residue chain is Uronate isomerase (470 aa).

The protein belongs to the metallo-dependent hydrolases superfamily. Uronate isomerase family.

It catalyses the reaction D-glucuronate = D-fructuronate. The catalysed reaction is aldehydo-D-galacturonate = keto-D-tagaturonate. Its pathway is carbohydrate metabolism; pentose and glucuronate interconversion. In Vibrio vulnificus (strain CMCP6), this protein is Uronate isomerase.